Consider the following 154-residue polypeptide: MSLIPRIFGDRRSTSVFDPFSIDVFDPFKELGFTVSNSGETSAFANTRIDWKETPEAHVFKADLPGLKKEEVKVEVEEDRVLQISGERNVEKEDKNDTWHRVERSSGKFMRRFRLPENAKMDQVKASMENGVLTVTVPKEEVNNPDVKSIEISG.

One can recognise a sHSP domain in the interval 40 to 154; the sequence is ETSAFANTRI…PDVKSIEISG (115 aa).

Belongs to the small heat shock protein (HSP20) family. As to quaternary structure, forms oligomeric structures.

The protein resides in the cytoplasm. The sequence is that of 17.6 kDa class I heat shock protein from Solanum peruvianum (Peruvian tomato).